We begin with the raw amino-acid sequence, 776 residues long: MAEPRQEFEVMEDHAGTYGLGDRKDQGGYTMLQDQEGDTDAGLKESPLQTPTEDGSEEPGSETSDAKSTPTAEDVTAPLVDEGAPGEQAAAQPHTEIPEGTTAEEAGIGDTPSLEDEAAGHVTQEPESGKVVQEGFLREPGPPGLSHQLMSGMPGAPLLPEGPREATRQPSGTGPEDTEGGRHAPELLKHQLLGDLHQEGPPLKGAGGKERPGSKEEVDEDRDVDESSPQDSPPSKASPAQDGRPPQTAAREATSIPGFPAKGAIHLPVDFLSKVSTEIPASEPDGPSAGRAKGQDAPLEFTFHVEITPNVQKEQAHSEEHLGRAAFPGAPGEGPEARGPSLGEDTKEADLPESSEKQPAAAPRGKPVSRVPQLKARMVSKSKDGTGSDDKKAKTSTRSSAKTLKNRPCLSPKHPTPGSSDPLIQPSSPAVCPEPPSSPKYVSSVTPRTGSSGAKEMKLKGADGKTKIATPRGAAPPGQKGQANATRIPAKTPPAPKTPPSSATKQVQRRPPPAGPRSERGEPPKSGDRSGYSSPGSPGTPGSRSRTPSLPTPPTREPKKVAVVRTPPKSPSSAKSRLQTAPVPMPDLKNVKSKIGSTENLKHQPGGGKVQIINKKLDLSNVQSKCGSKDNIKHVPGGGSVQIVYKPVDLSKVTSKCGSLGNIHHKPGGGQVEVKSEKLDFKDRVQSKIGSLDNITHVPGGGNKKIETHKLTFRENAKAKTDHGAEIVYKSPVVSGDTSPRHLSNVSSTGSIDMVDSPQLATLADEVSASLAKQGL.

A compositionally biased stretch (basic and acidic residues) spans 1-26 (MAEPRQEFEVMEDHAGTYGLGDRKDQ). 2 disordered regions span residues 1–263 (MAEP…PAKG) and 276–591 (STEI…LKNV). Position 2 is an N-acetylalanine (alanine 2). Phosphotyrosine is present on residues tyrosine 18 and tyrosine 29. A Glycyl lysine isopeptide (Lys-Gly) (interchain with G-Cter in ubiquitin) cross-link involves residue lysine 44. 2 positions are modified to phosphoserine: serine 46 and serine 61. A compositionally biased stretch (polar residues) spans 61–71 (SETSDAKSTPT). A phosphothreonine mark is found at threonine 69, threonine 71, and threonine 111. Basic and acidic residues-rich tracts occupy residues 179–189 (EGGRHAPELLK) and 207–216 (GGKERPGSKE). Serine 214 carries the post-translational modification Phosphoserine. Residues 217 to 228 (EVDEDRDVDESS) are compositionally biased toward acidic residues. Residues 314–323 (EQAHSEEHLG) show a composition bias toward basic and acidic residues. The segment covering 324 to 340 (RAAFPGAPGEGPEARGP) has biased composition (low complexity). Basic and acidic residues-rich tracts occupy residues 344-356 (EDTKEADLPESSE) and 381-393 (KSKDGTGSDDKKA). Over residues 440–452 (KYVSSVTPRTGSS) the composition is skewed to polar residues. Positions 455 to 466 (KEMKLKGADGKT) are enriched in basic and acidic residues. At threonine 470 the chain carries Phosphothreonine. Arginine 472 carries the omega-N-methylarginine modification. An N6,N6-dimethyllysine; alternate modification is found at lysine 480. Position 480 is an N6-acetyllysine; alternate (lysine 480). A phosphothreonine mark is found at threonine 486, threonine 492, and threonine 498. Phosphoserine is present on residues serine 502, serine 526, and serine 530. A compositionally biased stretch (basic and acidic residues) spans 517 to 528 (RSERGEPPKSGD). Positions 529-549 (RSGYSSPGSPGTPGSRSRTPS) are enriched in low complexity. A Phosphotyrosine modification is found at tyrosine 532. Phosphoserine is present on residues serine 533, serine 534, and serine 537. Residues threonine 540 and threonine 547 each carry the phosphothreonine modification. Phosphoserine is present on serine 549. Threonine 552 bears the Phosphothreonine mark. Residue lysine 560 is modified to N6-acetyllysine. Threonine 566 carries the phosphothreonine modification. Phosphoserine is present on residues serine 570 and serine 572. 4 Tau/MAP repeats span residues 579-609 (QTAPVPMPDLKNVKSKIGSTENLKHQPGGGK), 610-640 (VQIINKKLDLSNVQSKCGSKDNIKHVPGGGS), 641-671 (VQIVYKPVDLSKVTSKCGSLGNIHHKPGGGQ), and 672-703 (VEVKSEKLDFKDRVQSKIGSLDNITHVPGGGN). Lysine 589 participates in a covalent cross-link: Glycyl lysine isopeptide (Lys-Gly) (interchain with G-Cter in ubiquitin). The residue at position 594 (lysine 594) is an N6-acetyllysine; alternate. N6-methyllysine; alternate is present on lysine 594. Lysine 594 participates in a covalent cross-link: Glycyl lysine isopeptide (Lys-Gly) (interchain with G-Cter in ubiquitin); alternate. Serine 597 is modified (phosphoserine). Lysine 602 participates in a covalent cross-link: Glycyl lysine isopeptide (Lys-Gly) (interchain with G-Cter in ubiquitin). N6-acetyllysine; alternate is present on lysine 616. Residue lysine 616 forms a Glycyl lysine isopeptide (Lys-Gly) (interchain with G-Cter in ubiquitin); alternate linkage. Serine 620 and serine 624 each carry phosphoserine. Residue lysine 625 is modified to N6-acetyllysine. Serine 628 is modified (phosphoserine). Residue lysine 633 is modified to N6-acetyllysine; alternate. Lysine 633 is covalently cross-linked (Glycyl lysine isopeptide (Lys-Gly) (interchain with G-Cter in ubiquitin); alternate). The residue at position 640 (serine 640) is a Phosphoserine. At lysine 646 the chain carries N6,N6-dimethyllysine; alternate. N6-acetyllysine; alternate occurs at positions 646, 652, and 656. Glycyl lysine isopeptide (Lys-Gly) (interchain with G-Cter in ubiquitin); alternate cross-links involve residues lysine 646, lysine 652, and lysine 656. Serine 659 bears the Phosphoserine mark. 3 positions are modified to N6-acetyllysine; alternate: lysine 666, lysine 678, and lysine 682. Residues lysine 666, lysine 678, and lysine 682 each participate in a glycyl lysine isopeptide (Lys-Gly) (interchain with G-Cter in ubiquitin); alternate cross-link. Arginine 684 carries the omega-N-methylarginine modification. Residue serine 687 is modified to Phosphoserine. Lysine 688 participates in a covalent cross-link: Glycyl lysine isopeptide (Lys-Gly) (interchain with G-Cter in ubiquitin). Serine 691 bears the Phosphoserine mark. Lysine 704 is modified (N6-acetyllysine; alternate). Lysine 704 participates in a covalent cross-link: Glycyl lysine isopeptide (Lys-Gly) (interchain with G-Cter in ubiquitin); alternate. A Glycyl lysine isopeptide (Lys-Gly) (interchain with G-Cter in ubiquitin) cross-link involves residue lysine 710. Lysine 720 bears the N6-acetyllysine; alternate mark. A Glycyl lysine isopeptide (Lys-Gly) (interchain with G-Cter in ubiquitin); alternate cross-link involves residue lysine 720. Tyrosine 729 carries the post-translational modification Phosphotyrosine. Serine 731 and serine 735 each carry phosphoserine. The tract at residues 733 to 752 (VVSGDTSPRHLSNVSSTGSI) is disordered. The span at 736–751 (GDTSPRHLSNVSSTGS) shows a compositional bias: polar residues. Threonine 738 bears the Phosphothreonine mark. 4 positions are modified to phosphoserine: serine 739, serine 744, serine 751, and serine 757. Threonine 762 is subject to Phosphothreonine.

As to quaternary structure, interacts with MARK1, MARK2, MARK3 and MARK4. Interacts with SQSTM1 when polyubiquitinated. Interacts with PSMC2 through SQSTM1. Interacts with FKBP4. Binds to CSNK1D. Interacts with SGK1. Interacts with EPM2A; the interaction dephosphorylates MAPT at Ser-396. Interacts with PIN1. Interacts with LRRK2. Interacts with LRP1, leading to endocytosis; this interaction is reduced in the presence of LRPAP1/RAP. Post-translationally, polyubiquitinated. Requires functional TRAF6 and may provoke SQSTM1-dependent degradation by the proteasome. In terms of processing, phosphorylation at various serine and threonine residues in S-P or T-P motifs by proline-directed protein kinases (PDPK1, CDK1, CDK5, GSK3, MAPK) (a few sites per protein in interphase, more in mitosis), and at serine residues in K-X-G-S motifs by MAP/microtubule affinity-regulating kinase (MARK1, MARK2, MARK3 or MARK4), causing detachment from microtubules, and their disassembly. Phosphorylation at Ser-597 by BRSK1 and BRSK2 in neurons affects ability to bind microtubules and plays a role in neuron polarization. Phosphorylation at Ser-214 by SGK1 mediates microtubule depolymerization and neurite formation in hippocampal neurons. Phosphorylated by PHK. Dephosphorylation at several serine and threonine residues by the serine/threonine phosphatase PPP5C.

Its subcellular location is the cytoplasm. It is found in the cytosol. It localises to the cell membrane. The protein resides in the cytoskeleton. The protein localises to the cell projection. Its subcellular location is the axon. It is found in the dendrite. Its function is as follows. Promotes microtubule assembly and stability, and might be involved in the establishment and maintenance of neuronal polarity. The C-terminus binds axonal microtubules while the N-terminus binds neural plasma membrane components, suggesting that tau functions as a linker protein between both. Axonal polarity is predetermined by tau localization (in the neuronal cell) in the domain of the cell body defined by the centrosome. The short isoforms allow plasticity of the cytoskeleton whereas the longer isoforms may preferentially play a role in its stabilization. The protein is Microtubule-associated protein tau (MAPT) of Gorilla gorilla gorilla (Western lowland gorilla).